The primary structure comprises 833 residues: Leucine--tRNA ligase (833 aa).

The short motif at 41 to 52 is the 'HIGH' region element; sequence PYPSGAGLHVGH. A 'KMSKS' region motif is present at residues 610 to 614; sequence KMSKS. Position 613 (Lys613) interacts with ATP.

Belongs to the class-I aminoacyl-tRNA synthetase family.

It localises to the cytoplasm. It carries out the reaction tRNA(Leu) + L-leucine + ATP = L-leucyl-tRNA(Leu) + AMP + diphosphate. The polypeptide is Leucine--tRNA ligase (Streptococcus thermophilus (strain CNRZ 1066)).